We begin with the raw amino-acid sequence, 164 residues long: Transcription elongation factor GreA (164 aa).

This sequence belongs to the GreA/GreB family.

Necessary for efficient RNA polymerase transcription elongation past template-encoded arresting sites. The arresting sites in DNA have the property of trapping a certain fraction of elongating RNA polymerases that pass through, resulting in locked ternary complexes. Cleavage of the nascent transcript by cleavage factors such as GreA or GreB allows the resumption of elongation from the new 3'terminus. GreA releases sequences of 2 to 3 nucleotides. This is Transcription elongation factor GreA from Helicobacter pylori (strain J99 / ATCC 700824) (Campylobacter pylori J99).